Consider the following 296-residue polypeptide: MPELPEVETVRRGLAPALVGARFSRVTLRRANLRFPFPERFAARLEGRTVTGLARRAKYLTAALDSGETLVMHLGMSGRFDVALPDGSNLSPGDFYLEGAQGTPKHDHVVMAMSTGATVTYNDARRFGFMDLVPSAELAACRHFARMGVEPLDGLTGAVIARLFRHKIAPLKAALLDQRLIAGLGNIYVCEALHRARLHPEAPAGSLARPDGRPTPEANALAKAIVQVLEEAVKAGGSTLRDYAHTDGSAGAFQHAFRVYDRVGLPCSRPGCAGAITRIVQANRSTFFCATCQPPG.

P2 functions as the Schiff-base intermediate with DNA in the catalytic mechanism. The active-site Proton donor is the E3. K58 (proton donor; for beta-elimination activity) is an active-site residue. H106, R125, and K167 together coordinate DNA. Residues 258-294 (RVYDRVGLPCSRPGCAGAITRIVQANRSTFFCATCQP) form an FPG-type zinc finger. The active-site Proton donor; for delta-elimination activity is R284.

Belongs to the FPG family. Monomer. Requires Zn(2+) as cofactor.

It catalyses the reaction Hydrolysis of DNA containing ring-opened 7-methylguanine residues, releasing 2,6-diamino-4-hydroxy-5-(N-methyl)formamidopyrimidine.. It carries out the reaction 2'-deoxyribonucleotide-(2'-deoxyribose 5'-phosphate)-2'-deoxyribonucleotide-DNA = a 3'-end 2'-deoxyribonucleotide-(2,3-dehydro-2,3-deoxyribose 5'-phosphate)-DNA + a 5'-end 5'-phospho-2'-deoxyribonucleoside-DNA + H(+). Involved in base excision repair of DNA damaged by oxidation or by mutagenic agents. Acts as a DNA glycosylase that recognizes and removes damaged bases. Has a preference for oxidized purines, such as 7,8-dihydro-8-oxoguanine (8-oxoG). Has AP (apurinic/apyrimidinic) lyase activity and introduces nicks in the DNA strand. Cleaves the DNA backbone by beta-delta elimination to generate a single-strand break at the site of the removed base with both 3'- and 5'-phosphates. The protein is Formamidopyrimidine-DNA glycosylase of Methylobacterium radiotolerans (strain ATCC 27329 / DSM 1819 / JCM 2831 / NBRC 15690 / NCIMB 10815 / 0-1).